We begin with the raw amino-acid sequence, 107 residues long: MYIKGRLIFFFVVLVIALCSVLILLIIKISVWKDEPFHLSDAKEIECLGSCEIKNTNQKIHFFSIKENLFEEKGDIAGILNEDEQKVADKSIFIVILDDEKGIANEE.

The first 20 residues, Met-1–Ser-20, serve as a signal peptide directing secretion.

This is an uncharacterized protein from Listeria monocytogenes serovar 1/2a (strain ATCC BAA-679 / EGD-e).